Here is a 476-residue protein sequence, read N- to C-terminus: Bifunctional protein HldE (476 aa).

The ribokinase stretch occupies residues M1–S319. N195–E198 contributes to the ATP binding site. Residue D264 is part of the active site. A cytidylyltransferase region spans residues M345–Q476.

The protein in the N-terminal section; belongs to the carbohydrate kinase PfkB family. This sequence in the C-terminal section; belongs to the cytidylyltransferase family. Homodimer.

It carries out the reaction D-glycero-beta-D-manno-heptose 7-phosphate + ATP = D-glycero-beta-D-manno-heptose 1,7-bisphosphate + ADP + H(+). The enzyme catalyses D-glycero-beta-D-manno-heptose 1-phosphate + ATP + H(+) = ADP-D-glycero-beta-D-manno-heptose + diphosphate. It functions in the pathway nucleotide-sugar biosynthesis; ADP-L-glycero-beta-D-manno-heptose biosynthesis; ADP-L-glycero-beta-D-manno-heptose from D-glycero-beta-D-manno-heptose 7-phosphate: step 1/4. It participates in nucleotide-sugar biosynthesis; ADP-L-glycero-beta-D-manno-heptose biosynthesis; ADP-L-glycero-beta-D-manno-heptose from D-glycero-beta-D-manno-heptose 7-phosphate: step 3/4. Catalyzes the phosphorylation of D-glycero-D-manno-heptose 7-phosphate at the C-1 position to selectively form D-glycero-beta-D-manno-heptose-1,7-bisphosphate. In terms of biological role, catalyzes the ADP transfer from ATP to D-glycero-beta-D-manno-heptose 1-phosphate, yielding ADP-D-glycero-beta-D-manno-heptose. This chain is Bifunctional protein HldE, found in Shewanella loihica (strain ATCC BAA-1088 / PV-4).